The chain runs to 104 residues: ATP-dependent Clp protease adapter protein ClpS (104 aa).

This sequence belongs to the ClpS family. As to quaternary structure, binds to the N-terminal domain of the chaperone ClpA.

Its function is as follows. Involved in the modulation of the specificity of the ClpAP-mediated ATP-dependent protein degradation. This is ATP-dependent Clp protease adapter protein ClpS from Hydrogenovibrio crunogenus (strain DSM 25203 / XCL-2) (Thiomicrospira crunogena).